A 76-amino-acid chain; its full sequence is UPF0346 protein LBUL_1194 (76 aa).

Belongs to the UPF0346 family.

The sequence is that of UPF0346 protein LBUL_1194 from Lactobacillus delbrueckii subsp. bulgaricus (strain ATCC BAA-365 / Lb-18).